The sequence spans 225 residues: Peptidyl-tRNA hydrolase (225 aa).

Tyr27 is a binding site for tRNA. Catalysis depends on His32, which acts as the Proton acceptor. 3 residues coordinate tRNA: Tyr78, Asn80, and Asn126. The segment at 198 to 225 (FNPLDFSGPDRQDQPAPLNPAKTAPGES) is disordered.

The protein belongs to the PTH family. As to quaternary structure, monomer.

Its subcellular location is the cytoplasm. It carries out the reaction an N-acyl-L-alpha-aminoacyl-tRNA + H2O = an N-acyl-L-amino acid + a tRNA + H(+). Hydrolyzes ribosome-free peptidyl-tRNAs (with 1 or more amino acids incorporated), which drop off the ribosome during protein synthesis, or as a result of ribosome stalling. Functionally, catalyzes the release of premature peptidyl moieties from peptidyl-tRNA molecules trapped in stalled 50S ribosomal subunits, and thus maintains levels of free tRNAs and 50S ribosomes. The polypeptide is Peptidyl-tRNA hydrolase (Synechococcus sp. (strain JA-3-3Ab) (Cyanobacteria bacterium Yellowstone A-Prime)).